A 124-amino-acid chain; its full sequence is UPF0102 protein HCH_05895 (124 aa).

The protein belongs to the UPF0102 family.

This chain is UPF0102 protein HCH_05895, found in Hahella chejuensis (strain KCTC 2396).